The following is an 822-amino-acid chain: DNA gyrase subunit A (822 aa).

The Topo IIA-type catalytic domain maps to 32–497 (LPDVRDGLKP…QVLSLEDEDL (466 aa)). Catalysis depends on Tyr-120, which acts as the O-(5'-phospho-DNA)-tyrosine intermediate. The short motif at 524 to 530 (QKRGGRG) is the GyrA-box element.

This sequence belongs to the type II topoisomerase GyrA/ParC subunit family. Heterotetramer, composed of two GyrA and two GyrB chains. In the heterotetramer, GyrA contains the active site tyrosine that forms a transient covalent intermediate with DNA, while GyrB binds cofactors and catalyzes ATP hydrolysis.

Its subcellular location is the cytoplasm. It catalyses the reaction ATP-dependent breakage, passage and rejoining of double-stranded DNA.. Functionally, a type II topoisomerase that negatively supercoils closed circular double-stranded (ds) DNA in an ATP-dependent manner to modulate DNA topology and maintain chromosomes in an underwound state. Negative supercoiling favors strand separation, and DNA replication, transcription, recombination and repair, all of which involve strand separation. Also able to catalyze the interconversion of other topological isomers of dsDNA rings, including catenanes and knotted rings. Type II topoisomerases break and join 2 DNA strands simultaneously in an ATP-dependent manner. In Streptococcus pneumoniae (strain ATCC BAA-255 / R6), this protein is DNA gyrase subunit A.